The sequence spans 512 residues: Krueppel-like factor 11 (512 aa).

Positions 109 to 128 are disordered; sequence PQSPDLVEPSTRTPVSPQVT. Residues 118-128 are compositionally biased toward polar residues; it reads STRTPVSPQVT. Residue S124 is modified to Phosphoserine. 3 C2H2-type zinc fingers span residues 394 to 418, 424 to 448, and 454 to 476; these read YVCS…LRTH, FNCS…RRTH, and FVCP…ARRH.

It belongs to the Sp1 C2H2-type zinc-finger protein family. Interacts with SIN3A. As to expression, ubiquitous. Higher expression in erythroid cells.

The protein localises to the nucleus. Its function is as follows. Transcription factor. Activates the epsilon- and gamma-globin gene promoters and, to a much lower degree, the beta-globin gene and represses promoters containing SP1-like binding inhibiting cell growth. Represses transcription of SMAD7 which enhances TGF-beta signaling. Induces apoptosis. This Homo sapiens (Human) protein is Krueppel-like factor 11 (KLF11).